The primary structure comprises 828 residues: Potassium channel SKOR (828 aa).

Topologically, residues 1-86 (MGGSSGGGVS…PDNRWYKAWT (86 aa)) are cytoplasmic. Residues 87 to 107 (MFILIWALYSSFFTPLEFGFF) form a helical membrane-spanning segment. Residues 108 to 114 (RGLPENL) are Extracellular-facing. The helical transmembrane segment at 115–135 (FILDIAGQIAFLVDIVLTFFV) threads the bilayer. At 136 to 158 (AYRDSRTYRMIYKRSSIALRYLK) the chain is on the cytoplasmic side. The helical transmembrane segment at 159-179 (STFIIDLLACMPWDIIYKAAG) threads the bilayer. At 180–185 (EKEEVR) the chain is on the extracellular side. Residues 186–206 (YLLLIRLYRVHRVILFFHKME) traverse the membrane as a helical; Voltage-sensor segment. Topologically, residues 207-220 (KDIRINYLFTRIVK) are cytoplasmic. A helical membrane pass occupies residues 221-241 (LIFVELYCTHTAACIFYYLAT). Residues 242–276 (TLPASQEGYTWIGSLKLGDYSYSKFREIDLWTRYT) are Extracellular-facing. An intramembrane region (pore-forming) is located at residues 277-296 (TSMYFAVVTMATVGYGDIHA). Topologically, residues 297–300 (VNMR) are extracellular. A helical transmembrane segment spans residues 301-321 (EMIFAMVYISFDMILGAYLIG). Over 322–828 (NMTALIVKGS…GQKLYLAVET (507 aa)) the chain is Cytoplasmic. 403 to 523 (LFRGCSSEFI…RRILNNLLEG (121 aa)) lines the a nucleoside 3',5'-cyclic phosphate pocket. ANK repeat units lie at residues 545-576 (EAELALKLNSAAFYGDLYQLKSLIRAGGDPNK), 580-609 (DGRSPLHLAASRGYEDITLYLIQESVDVNI), 613-642 (LGSTPLLEAIKNGNDRVAALLVKEGATLNI), 644-673 (NAGTFLCTVVAKGDSDFLKRLLSNGIDPNS), 677-706 (DHRTPLHVAASEGFYVLAIQLVEASANVLA), and 710-740 (WGNTPLDEALGCGNKMLIKLLEDAKNSQISS). The region spanning 756–828 (KCTVYFSHPG…GQKLYLAVET (73 aa)) is the KHA domain.

Belongs to the potassium channel family. Plant (TC 1.A.1.4) subfamily. As to quaternary structure, the potassium channel is probably composed of a homo- or heterotetrameric complex of pore-forming subunits. As to expression, expressed in root pericycle and xylem parenchyma, and in flower at a lower level.

It is found in the membrane. Its function is as follows. Highly selective outward-rectifying potassium channel. Involved in potassium release into the xylem sap toward the shoots. Assuming opened or closed conformations in response to the voltage difference across the membrane, the channel is activated by depolarization. The voltage-dependence of the channel is abolished by internal or external acidification. May interact with the cytoskeleton or with regulatory proteins. The protein is Potassium channel SKOR (SKOR) of Arabidopsis thaliana (Mouse-ear cress).